Reading from the N-terminus, the 68-residue chain is Large ribosomal subunit protein uL29 (68 aa).

It belongs to the universal ribosomal protein uL29 family.

This Archaeoglobus fulgidus (strain ATCC 49558 / DSM 4304 / JCM 9628 / NBRC 100126 / VC-16) protein is Large ribosomal subunit protein uL29 (rpl29).